A 599-amino-acid chain; its full sequence is Sulfite reductase [NADPH] flavoprotein alpha-component (599 aa).

The region spanning 64-202 is the Flavodoxin-like domain; it reads VTLISASQTG…AASEWRACVV (139 aa). FMN contacts are provided by residues 70–75, 117–120, and 153–162; these read SQTGNA, STQG, and LGDTSYEFFC. The FAD-binding FR-type domain maps to 234–448; that stretch reads DAPLTATLSV…IEHNDNFRLP (215 aa). Residues Thr322, Ala356, 386 to 389, 404 to 406, Tyr410, and 419 to 422 each bind FAD; these read RLYS, TVG, and GGAS. NADP(+) contacts are provided by residues 519-520, 525-529, and Asp561; these read SR and KIYVQ. Residue Tyr599 participates in FAD binding.

This sequence belongs to the NADPH-dependent sulphite reductase flavoprotein subunit CysJ family. In the N-terminal section; belongs to the flavodoxin family. The protein in the C-terminal section; belongs to the flavoprotein pyridine nucleotide cytochrome reductase family. As to quaternary structure, alpha(8)-beta(8). The alpha component is a flavoprotein, the beta component is a hemoprotein. The cofactor is FAD. Requires FMN as cofactor.

It carries out the reaction hydrogen sulfide + 3 NADP(+) + 3 H2O = sulfite + 3 NADPH + 4 H(+). It participates in sulfur metabolism; hydrogen sulfide biosynthesis; hydrogen sulfide from sulfite (NADPH route): step 1/1. In terms of biological role, component of the sulfite reductase complex that catalyzes the 6-electron reduction of sulfite to sulfide. This is one of several activities required for the biosynthesis of L-cysteine from sulfate. The flavoprotein component catalyzes the electron flow from NADPH -&gt; FAD -&gt; FMN to the hemoprotein component. The chain is Sulfite reductase [NADPH] flavoprotein alpha-component from Salmonella typhi.